The following is a 328-amino-acid chain: D-cysteine desulfhydrase (328 aa).

Lys-51 carries the post-translational modification N6-(pyridoxal phosphate)lysine.

The protein belongs to the ACC deaminase/D-cysteine desulfhydrase family. As to quaternary structure, homodimer. Pyridoxal 5'-phosphate is required as a cofactor.

It carries out the reaction D-cysteine + H2O = hydrogen sulfide + pyruvate + NH4(+) + H(+). In terms of biological role, catalyzes the alpha,beta-elimination reaction of D-cysteine and of several D-cysteine derivatives. It could be a defense mechanism against D-cysteine. The chain is D-cysteine desulfhydrase from Klebsiella pneumoniae subsp. pneumoniae (strain ATCC 700721 / MGH 78578).